A 467-amino-acid chain; its full sequence is A-type ATP synthase subunit B (467 aa).

Residues 95-114 form a disordered region; the sequence is GKGQPRDHMPLPPPEDFRDV.

Belongs to the ATPase alpha/beta chains family. As to quaternary structure, has multiple subunits with at least A(3), B(3), C, D, E, F, H, I and proteolipid K(x).

It localises to the cell membrane. Its function is as follows. Component of the A-type ATP synthase that produces ATP from ADP in the presence of a proton gradient across the membrane. The B chain is a regulatory subunit. In Pyrobaculum aerophilum (strain ATCC 51768 / DSM 7523 / JCM 9630 / CIP 104966 / NBRC 100827 / IM2), this protein is A-type ATP synthase subunit B.